The following is an 854-amino-acid chain: DNA mismatch repair protein MutS (854 aa).

Residues 1–21 are disordered; sequence MTASDIQPTEPHTPPTPHADT. Residue 658–665 participates in ATP binding; that stretch reads GPNASGKS.

This sequence belongs to the DNA mismatch repair MutS family.

This protein is involved in the repair of mismatches in DNA. It is possible that it carries out the mismatch recognition step. This protein has a weak ATPase activity. The polypeptide is DNA mismatch repair protein MutS (Trichormus variabilis (strain ATCC 29413 / PCC 7937) (Anabaena variabilis)).